The primary structure comprises 283 residues: Thymidylate synthase (283 aa).

A dUMP-binding site is contributed by arginine 22. Cysteine 160 functions as the Nucleophile in the catalytic mechanism. Residues 180-183 (RSCD), asparagine 191, and 221-223 (HIY) each bind dUMP. Aspartate 183 provides a ligand contact to (6R)-5,10-methylene-5,6,7,8-tetrahydrofolate. Serine 282 is a binding site for (6R)-5,10-methylene-5,6,7,8-tetrahydrofolate.

Belongs to the thymidylate synthase family. Bacterial-type ThyA subfamily. Homodimer.

The protein resides in the cytoplasm. The enzyme catalyses dUMP + (6R)-5,10-methylene-5,6,7,8-tetrahydrofolate = 7,8-dihydrofolate + dTMP. It functions in the pathway pyrimidine metabolism; dTTP biosynthesis. Catalyzes the reductive methylation of 2'-deoxyuridine-5'-monophosphate (dUMP) to 2'-deoxythymidine-5'-monophosphate (dTMP) while utilizing 5,10-methylenetetrahydrofolate (mTHF) as the methyl donor and reductant in the reaction, yielding dihydrofolate (DHF) as a by-product. This enzymatic reaction provides an intracellular de novo source of dTMP, an essential precursor for DNA biosynthesis. This Vibrio vulnificus (strain CMCP6) protein is Thymidylate synthase.